A 335-amino-acid polypeptide reads, in one-letter code: Mitochondrial uncoupling protein 4C (335 aa).

Solcar repeat units lie at residues 34-125, 137-229, and 238-329; these read RNLF…FRRP, LKIY…SKRT, and EGLP…LRQW. 6 helical membrane-spanning segments follow: residues 40–57, 100–118, 138–157, 204–223, 244–264, and 304–323; these read YVNT…VFPL, GFSA…RVVL, KIYM…QALA, GVGP…VGSY, FVSS…ADVI, and GLMP…WLSV.

The protein belongs to the mitochondrial carrier (TC 2.A.29) family.

It localises to the mitochondrion inner membrane. In terms of biological role, mitochondrial protein that is likely to be responsible for thermogenic respiration. Likely to function in mitochondrial uncoupling i.e. creating mitochondrial proton leaks across the inner mitochondrial membrane and can therefore dissipate the mitochondrial proton gradient and convert the energy of substrate oxidation into heat instead of ATP. Involved in cold tolerance, it is required for development to the adult stage at low temperatures. This chain is Mitochondrial uncoupling protein 4C, found in Drosophila melanogaster (Fruit fly).